Consider the following 359-residue polypeptide: Pyruvate dehydrogenase E1 component subunit beta, mitochondrial (359 aa).

A mitochondrion-targeting transit peptide spans methionine 1–alanine 30. A Phosphotyrosine modification is found at tyrosine 67. A thiamine diphosphate-binding site is contributed by glutamate 89. Residues isoleucine 142, alanine 190, isoleucine 191, aspartate 193, and asparagine 195 each coordinate K(+). An N6-acetyllysine modification is found at lysine 354.

Heterotetramer of two PDHA1 and two PDHB subunits. The heterotetramer interacts with DLAT, and is part of the multimeric pyruvate dehydrogenase complex that contains multiple copies of pyruvate dehydrogenase (E1), dihydrolipoamide acetyltransferase (DLAT, E2) and lipoamide dehydrogenase (DLD, E3). These subunits are bound to an inner core composed of about 48 DLAT and 12 PDHX molecules. Interacts with DLAT. It depends on thiamine diphosphate as a cofactor.

Its subcellular location is the mitochondrion matrix. The enzyme catalyses N(6)-[(R)-lipoyl]-L-lysyl-[protein] + pyruvate + H(+) = N(6)-[(R)-S(8)-acetyldihydrolipoyl]-L-lysyl-[protein] + CO2. In terms of biological role, the pyruvate dehydrogenase complex catalyzes the overall conversion of pyruvate to acetyl-CoA and CO(2), and thereby links the glycolytic pathway to the tricarboxylic cycle. In Mus musculus (Mouse), this protein is Pyruvate dehydrogenase E1 component subunit beta, mitochondrial (Pdhb).